The chain runs to 297 residues: Protease HtpX homolog (297 aa).

2 helical membrane passes run 14 to 34 (VILL…AGYL) and 39 to 59 (YQLG…SMIF). Histidine 143 contributes to the Zn(2+) binding site. Glutamate 144 is an active-site residue. Histidine 147 provides a ligand contact to Zn(2+). 2 helical membrane-spanning segments follow: residues 158-178 (IAVA…RMMW) and 193-213 (GFGA…PLAA). Residue glutamate 225 participates in Zn(2+) binding.

Belongs to the peptidase M48B family. It depends on Zn(2+) as a cofactor.

It is found in the cell membrane. This is Protease HtpX homolog from Streptococcus equi subsp. zooepidemicus (strain MGCS10565).